The sequence spans 555 residues: Glutamine--tRNA ligase (555 aa).

The 'HIGH' region motif lies at 34–44 (PEPNGYLHIGH). ATP is bound by residues 35–37 (EPN) and 41–47 (HIGHAKS). L-glutamine contacts are provided by aspartate 67 and tyrosine 212. ATP-binding positions include threonine 231, 261 to 262 (RL), and 269 to 271 (MSK). The 'KMSKS' region signature appears at 268–272 (VMSKR).

It belongs to the class-I aminoacyl-tRNA synthetase family. As to quaternary structure, monomer.

The protein localises to the cytoplasm. It carries out the reaction tRNA(Gln) + L-glutamine + ATP = L-glutaminyl-tRNA(Gln) + AMP + diphosphate. The chain is Glutamine--tRNA ligase from Cronobacter sakazakii (strain ATCC BAA-894) (Enterobacter sakazakii).